The following is a 129-amino-acid chain: uncharacterized protein (129 aa).

The VOC domain maps to 6–129 (QVHHIAIIAT…DGLPLELYEQ (124 aa)). Residues His-9, Glu-57, His-78, and Glu-125 each contribute to the a divalent metal cation site.

This sequence to B.subtilis YwkD.

This is an uncharacterized protein from Escherichia coli (strain K12).